The chain runs to 807 residues: AP-5 complex subunit zeta-1 (807 aa).

Probably part of the adaptor protein complex 5 (AP-5) a tetramer composed of AP5B1, AP5M1, AP5S1 and AP5Z1. Interacts with ZFYVE26 and SPG11.

The protein localises to the cytoplasm. It is found in the nucleus. Its function is as follows. As part of AP-5, a probable fifth adaptor protein complex it may be involved in endosomal transport. The polypeptide is AP-5 complex subunit zeta-1 (Ap5z1) (Mus musculus (Mouse)).